A 180-amino-acid polypeptide reads, in one-letter code: Minor allergen Can f 2 (180 aa).

The first 18 residues, 1–18 (MQLLLLTVGLALICGLQA), serve as a signal peptide directing secretion. Asn-45 is a glycosylation site (N-linked (GlcNAc...) asparagine). Cysteines 82 and 175 form a disulfide.

This sequence belongs to the calycin superfamily. Lipocalin family. In terms of tissue distribution, tongue epithelial tissue and parotid gland.

The protein localises to the secreted. The protein is Minor allergen Can f 2 of Canis lupus familiaris (Dog).